Here is an 88-residue protein sequence, read N- to C-terminus: Small ribosomal subunit protein bS20 (88 aa).

The segment at 1-28 (MANIKSQIKRNKTNEKARLRNKAVKSSL) is disordered.

It belongs to the bacterial ribosomal protein bS20 family.

In terms of biological role, binds directly to 16S ribosomal RNA. The sequence is that of Small ribosomal subunit protein bS20 from Streptomyces avermitilis (strain ATCC 31267 / DSM 46492 / JCM 5070 / NBRC 14893 / NCIMB 12804 / NRRL 8165 / MA-4680).